The sequence spans 308 residues: Probable 5-dehydro-4-deoxyglucarate dehydratase (308 aa).

Belongs to the DapA family.

It catalyses the reaction 5-dehydro-4-deoxy-D-glucarate + H(+) = 2,5-dioxopentanoate + CO2 + H2O. Its pathway is carbohydrate acid metabolism; D-glucarate degradation; 2,5-dioxopentanoate from D-glucarate: step 2/2. This Oceanobacillus iheyensis (strain DSM 14371 / CIP 107618 / JCM 11309 / KCTC 3954 / HTE831) protein is Probable 5-dehydro-4-deoxyglucarate dehydratase.